The chain runs to 299 residues: MTESNRLRIAIQKSGRLSTDSQQLLKSCGVKFSINEQSLIAHADNMPIDLLRVRDDDIPGLVMDGVVDLGIIGENVLEEEQIERQTLNKPAEFVKLRQLDFGACRLSLAVPTEFSYADASSLEGLRIATSYPNLLRRFMQQKGISYRDCMLKGSVEVAPRAGLADGICDLVSTGATLEANGLYETEVIYRSMACVIQSTQTQTPSKQALIDRILSRVNGVIRARESKYILLHAPTETLDQIVALLPGAENPTVLPLNDDTNRVAIHAVSTEDLFWDTMEQLTALGASSILVMPIEKMMG.

It belongs to the ATP phosphoribosyltransferase family. Long subfamily. Mg(2+) serves as cofactor.

The protein resides in the cytoplasm. The catalysed reaction is 1-(5-phospho-beta-D-ribosyl)-ATP + diphosphate = 5-phospho-alpha-D-ribose 1-diphosphate + ATP. It participates in amino-acid biosynthesis; L-histidine biosynthesis; L-histidine from 5-phospho-alpha-D-ribose 1-diphosphate: step 1/9. With respect to regulation, feedback inhibited by histidine. In terms of biological role, catalyzes the condensation of ATP and 5-phosphoribose 1-diphosphate to form N'-(5'-phosphoribosyl)-ATP (PR-ATP). Has a crucial role in the pathway because the rate of histidine biosynthesis seems to be controlled primarily by regulation of HisG enzymatic activity. This Shewanella sp. (strain MR-7) protein is ATP phosphoribosyltransferase.